The sequence spans 441 residues: Amino-acid acetyltransferase (441 aa).

The N-acetyltransferase domain occupies 295 to 434 (EQVRRATIND…QALYNYQRRS (140 aa)).

This sequence belongs to the acetyltransferase family. ArgA subfamily. In terms of assembly, homohexamer.

The protein resides in the cytoplasm. The enzyme catalyses L-glutamate + acetyl-CoA = N-acetyl-L-glutamate + CoA + H(+). It participates in amino-acid biosynthesis; L-arginine biosynthesis; N(2)-acetyl-L-ornithine from L-glutamate: step 1/4. In Pectobacterium atrosepticum (strain SCRI 1043 / ATCC BAA-672) (Erwinia carotovora subsp. atroseptica), this protein is Amino-acid acetyltransferase.